Here is a 165-residue protein sequence, read N- to C-terminus: Heme oxygenase (165 aa).

It belongs to the heme oxygenase family.

The enzyme catalyses heme b + 3 reduced [NADPH--hemoprotein reductase] + 3 O2 = biliverdin IXalpha + CO + Fe(2+) + 3 oxidized [NADPH--hemoprotein reductase] + 3 H2O + H(+). Catalyzes the opening of the heme ring to form the open-chain tetrapyrrole biliverdin IX with the release of iron and carbon monoxide (CO). The protein is Heme oxygenase (bphO) of Xanthomonas campestris pv. campestris (strain 8004).